We begin with the raw amino-acid sequence, 784 residues long: Homeobox-leucine zipper protein ROC2 (784 aa).

Residues 60 to 113 (AESGDNMIRSRASDPLGGDEFESKSGSENVDGVSVDDQDPNQRPRKKRYHRHTQ) form a disordered region. Basic residues predominate over residues 102 to 113 (RPRKKRYHRHTQ). The homeobox DNA-binding region spans 104–163 (RKKRYHRHTQHQIQEMEAFFKECPHPDDKQRKELSRELGLEPLQVKFWFQNKRTQMKNQH). Residues 158 to 234 (QMKNQHERHE…DRISAIAAKY (77 aa)) are a coiled coil. The 238-residue stretch at 286–523 (SEVDKPMIVE…LDRQCERLAS (238 aa)) folds into the START domain.

Belongs to the HD-ZIP homeobox family. Class IV subfamily.

It is found in the nucleus. In terms of biological role, probable transcription factor. This Oryza sativa subsp. japonica (Rice) protein is Homeobox-leucine zipper protein ROC2 (ROC2).